The primary structure comprises 366 residues: MEGLRRHSVMLDCKLWKDDPIYFFKTLPPYISKYAQRADDASIQAQIDVFGKDDVGAMPGALGPRGNFAAVTFAESFPDRVAMLAYLNEVLSFYECFEKQMTEMLDATLYANPVPKDPKYDNPVWQANYKNTMTKWPKILENLDPKLGPKCVKSLVALVEGTDMEPKMAHYKTMKEYALDRTNYIAWPVACDNAEFGSQLNLTQDQLDSVRDIFLPLWTHSCYVYDYYHYDKEAEIHSTYGKGRSMINSIPLLNRLKGLSVEEAKAWLKQRCFELEKEYLQRKEDYFSENPVEAVPVDLRRWFLSQEDLATGFAIWCATTYHNHPPFGEGYAAPYEKRRKEGALWFEKVTESDQLMTGGFEVRYAN.

The protein belongs to the terpene synthase family. In terms of assembly, homodimer.

It carries out the reaction N,N-dimethyl-cadaverine + 2,6,9-trimethyl-13-oxatetracyclo[6.3.1.1(6,9).0(1,5)]tridecane carbocation = pre-flavunoidine + H(+). It functions in the pathway secondary metabolite biosynthesis; terpenoid biosynthesis. In terms of biological role, terpene cyclase-like protein; part of the gene cluster that mediates the biosynthesis of flavunoidine, an alkaloidal terpenoid with a tetracyclic cage-like core connected to dimethylcadaverine via a C-N bond and acylated with 5,5-dimethyl-L-pipecolate. The tetracyclic core is synthesized by the terpene cyclase flvE and the cytochrome P450 monooxygenase flvD. The terpene cyclase flvE catalyzes the cyclization of farnesyl pyrophosphate (FPP) to form (1R,4R,5S)-(+)-acoradiene and the cytochrome P450 monooxygenase flvD is then responsible for oxidative conversion of (1R,4R,5S)-(+)-acoradiene into the tetracyclic cage present in the final product flavunoidine. In parallel, the N-methyltransferase flvH dimethylates L-lysine to give N,N-dimethyl-L-Lysin which is decarboxylated by flvG to afford dimethylcadaverine. The terpene cyclase-like protein flvF is the enzyme that attaches the dimethylcadaverine precusor at the C-7 of the tetracyclic cage to yield pre-flavunoidine. The cytochrome monooxygenase flvC hydroxylates the C-10 position of pre-flavunoidine whereas the NRPS flvI acylates the terpenoid core at the hydroxylated C-10 with dimethylpipecolate to yield final flavunoidine. The bifunctional enzyme flvA and the dehydrogenase flvB are responsible for the synthesis of the dimethylpipecolate precursor. The PLP-dependent lyase domain of flvA might use L-O-acetyl-homoserine and alpha-keto-isovalerate to form an intermediary ketone that can cyclize intramolecularly to yield an imine. The imine can be reduced by flvB to yield the 6-carboxylated pipecolate. The C-terminal alpha-KG-dependent oxygenase domain of flvA is then proposed to catalyze the decarboxylation to yield dimethylpipecolate. The polypeptide is Terpene cyclase-like protein flvF (Aspergillus flavus (strain ATCC 200026 / FGSC A1120 / IAM 13836 / NRRL 3357 / JCM 12722 / SRRC 167)).